The sequence spans 260 residues: 3'-5' ssDNA/RNA exonuclease TatD (260 aa).

Residues Glu91, His127, and His152 each contribute to the a divalent metal cation site.

It belongs to the metallo-dependent hydrolases superfamily. TatD-type hydrolase family. TatD subfamily. In terms of assembly, monomer. Mg(2+) is required as a cofactor.

The protein localises to the cytoplasm. In terms of biological role, 3'-5' exonuclease that prefers single-stranded DNA and RNA. May play a role in the H(2)O(2)-induced DNA damage repair. This chain is 3'-5' ssDNA/RNA exonuclease TatD, found in Shigella flexneri serotype 5b (strain 8401).